The sequence spans 314 residues: Methionyl-tRNA formyltransferase (314 aa).

112–115 (SLLP) is a (6S)-5,6,7,8-tetrahydrofolate binding site.

This sequence belongs to the Fmt family.

It catalyses the reaction L-methionyl-tRNA(fMet) + (6R)-10-formyltetrahydrofolate = N-formyl-L-methionyl-tRNA(fMet) + (6S)-5,6,7,8-tetrahydrofolate + H(+). Functionally, attaches a formyl group to the free amino group of methionyl-tRNA(fMet). The formyl group appears to play a dual role in the initiator identity of N-formylmethionyl-tRNA by promoting its recognition by IF2 and preventing the misappropriation of this tRNA by the elongation apparatus. The polypeptide is Methionyl-tRNA formyltransferase (Buchnera aphidicola subsp. Acyrthosiphon pisum (strain 5A)).